Consider the following 361-residue polypeptide: tRNA-specific 2-thiouridylase MnmA (361 aa).

ATP is bound by residues 8–15 (AMSGGVDS) and Met-35. The interaction with target base in tRNA stretch occupies residues 95-97 (NPD). The Nucleophile role is filled by Cys-100. The cysteines at positions 100 and 196 are disulfide-linked. Gly-124 serves as a coordination point for ATP. The interval 146 to 148 (KDQ) is interaction with tRNA. Cys-196 serves as the catalytic Cysteine persulfide intermediate. The interval 303-304 (RY) is interaction with tRNA.

It belongs to the MnmA/TRMU family.

Its subcellular location is the cytoplasm. The enzyme catalyses S-sulfanyl-L-cysteinyl-[protein] + uridine(34) in tRNA + AH2 + ATP = 2-thiouridine(34) in tRNA + L-cysteinyl-[protein] + A + AMP + diphosphate + H(+). Its function is as follows. Catalyzes the 2-thiolation of uridine at the wobble position (U34) of tRNA, leading to the formation of s(2)U34. The polypeptide is tRNA-specific 2-thiouridylase MnmA (Chlamydia pneumoniae (Chlamydophila pneumoniae)).